We begin with the raw amino-acid sequence, 414 residues long: MRRYSIFAVAREALRYHSGWEKAWASPEPKKRYDVIVVGAGGHGLATAYYLGKVHGIKNVAIIEKGWLGGGNTGRNTTIIRSNYLQDPSAAIYEKARSLYEGLSQDLNYNVMFSPRGLLMLAQSEHEMRGYKRTVYANNLQNVETRWIEPKEVKKLVPILNIAGPRYPVLGALLQEKGGTARHDAVAWGYARACSDMGMDLLQNTEVTGVRTEGGRVVGVDTSRGSIDCGKLAIVVAGHSSVLAGMAGFRLPIESMALQAWVSEPIKPTIDVVVMANLVHGYMSQSDKGELVIGGGTDGFNNYSQRGSWHHVEETTRALIETFPVISRLKMLRQWGGIVDMTGDRSPILSKTPVDGIFVNCGWGTGGFKAIPGSGFAMAELVAKGYSPLAAEFGLHRFKEGQFIDESVAAGVAH.

The FAD site is built by glycine 42, histidine 43, glutamate 64, asparagine 72, threonine 77, and isoleucine 79. Histidine 183 carries the post-translational modification Tele-8alpha-FMN histidine. 4 residues coordinate FAD: valine 207, glycine 364, glycine 367, and lysine 369.

This sequence belongs to the SoxB family. In terms of assembly, heterotetramer composed of subunits alpha (SoxA), beta (SoxB), gamma (SoxG) and delta (SoxD). The cofactor is FAD. FMN is required as a cofactor.

The protein resides in the cytoplasm. It carries out the reaction sarcosine + (6S)-5,6,7,8-tetrahydrofolate + O2 = (6R)-5,10-methylene-5,6,7,8-tetrahydrofolate + glycine + H2O2. The enzyme catalyses sarcosine + O2 + H2O = formaldehyde + glycine + H2O2. In terms of biological role, in the presence of tetrahydrofolate, catalyzes the oxidative demethylation of sarcosine to yield glycine, 5,10-methylenetetrahydrofolate and hydrogen peroxide. In the absence of tetrahydrofolate, catalyzes the oxidative demethylation of sarcosine to yield glycine, formaldehyde and hydrogen peroxide. The polypeptide is Sarcosine oxidase subunit beta (soxB) (Rhodobacter capsulatus (strain ATCC BAA-309 / NBRC 16581 / SB1003)).